The chain runs to 338 residues: MANHAPFETDISTLTRFVMEQGRKAQGTGELTQLLNSLCTAIKAISSAVRQAGIAQLYGIAGSTNVTGDQVKKLDILSNDLVINMLKSSYATCVLVSEENTNAIIIEPEKRGKYVVCFDPLDGSSNIDCLVSIGTIFGIYRKKSTDEPSEKDALQPGRDLVAAGYALYGSATMLVLAMDCGVNCFMLDPSIGEFIMVDRDVKMKKKGNIYSLNEGYAKDFDPAINEYLQRKKFPPDGSAPYGARYVGSMVADIHRTLVYGGIFLYPANKKSPSGKLRLLYECNPIAYVMEKAGGLATTGDKDILDIVPTEIHQKAPVVMGSSEDVQEFLEIYRKHKAK.

Residue Ala-2 is modified to N-acetylalanine. AMP-binding positions include 18–22 (VMEQG) and 28–32 (TGELT). Mg(2+)-binding residues include Asp-69 and Glu-98. AMP is bound at residue 113–114 (KY). 3 residues coordinate Mg(2+): Asp-119, Leu-121, and Asp-122. 122-125 (DGSS) provides a ligand contact to substrate. Arg-141 contributes to the AMP binding site. At Lys-151 the chain carries N6-succinyllysine. Substrate-binding positions include 213 to 216 (NEGY), 244 to 249 (RYVGSM), Tyr-265, and 275 to 277 (KLR). Phosphotyrosine is present on residues Tyr-216, Tyr-245, and Tyr-265. Glu-281 provides a ligand contact to Mg(2+).

It belongs to the FBPase class 1 family. Homotetramer. Mg(2+) serves as cofactor. In terms of tissue distribution, detected in pancreatic beta-cell lines MIN6 and beta-TC and in liver (at protein level). Preferentially expressed in liver, with lower levels detected in pancreatic islets and intestine, and very low levels in blood, muscle, brain and spleen.

The catalysed reaction is beta-D-fructose 1,6-bisphosphate + H2O = beta-D-fructose 6-phosphate + phosphate. It functions in the pathway carbohydrate biosynthesis; gluconeogenesis. Subject to complex allosteric regulation. The enzyme can assume an active R-state, or an inactive T-state. Intermediate conformations may exist. AMP acts as an allosteric inhibitor. AMP binding affects the turnover of bound substrate and not the affinity for substrate. Fructose 2,6-bisphosphate acts as a competitive inhibitor. Fructose 2,6-bisphosphate and AMP have synergistic effects. Functionally, catalyzes the hydrolysis of fructose 1,6-bisphosphate to fructose 6-phosphate in the presence of divalent cations, acting as a rate-limiting enzyme in gluconeogenesis. Plays a role in regulating glucose sensing and insulin secretion of pancreatic beta-cells. Appears to modulate glycerol gluconeogenesis in liver. Important regulator of appetite and adiposity; increased expression of the protein in liver after nutrient excess increases circulating satiety hormones and reduces appetite-stimulating neuropeptides and thus seems to provide a feedback mechanism to limit weight gain. This is Fructose-1,6-bisphosphatase 1 (Fbp1) from Mus musculus (Mouse).